Consider the following 201-residue polypeptide: Glutathione peroxidase 1, mitochondrial (201 aa).

The transit peptide at 1–27 directs the protein to the mitochondrion; it reads MLLTRKNVAVRPARAARRDVRAMSLLG. The active site involves U75. Residue U75 is a non-standard amino acid, selenocysteine.

The protein resides in the mitochondrion. The catalysed reaction is 2 glutathione + H2O2 = glutathione disulfide + 2 H2O. May constitute a glutathione peroxidase-like protective system against oxidative stresses. Hydrogen peroxide, tert-butyl hydroperoxide and cumene, but not phosphatidylcholine hydroperoxide, can act as acceptors. This is Glutathione peroxidase 1, mitochondrial from Chlamydomonas reinhardtii (Chlamydomonas smithii).